The primary structure comprises 1053 residues: Serine/threonine-protein phosphatase 6 regulatory ankyrin repeat subunit A (1053 aa).

ANK repeat units follow at residues 40 to 69 (EKRT…RVNA), 73 to 102 (KWLT…DVNA), 106 to 135 (NWQT…NVNV), 139 to 168 (AGRT…NINA), 172 to 201 (KDRR…EVTC), 205 to 234 (KSYT…DMNE), 238 to 267 (YGNT…NVNQ), 271 to 301 (KGFT…DVNM), 305 to 334 (DGKT…VIDC), 338 to 367 (NGNT…DTAK), 371 to 400 (HGMF…DIDT), 404 to 433 (FGRT…DFNK), 437 to 466 (FGRS…SVND), 470 to 500 (RGCT…NPGI), 504 to 534 (QGYN…DVLM), 549 to 578 (ATIS…DLDV), 582 to 611 (SGRT…SILV), 616 to 645 (LKRT…PQNA), 652 to 681 (NGQT…NVDA), 685 to 714 (WGRT…KCLL), 718 to 747 (RGRT…SVDA), 755 to 786 (HGYT…KIDG), 788 to 817 (AFSP…SIVN), 822 to 851 (KGRT…QVNS), 855 to 885 (TGKT…DLTL), 889 to 918 (SKNT…DRNL), and 925 to 954 (ALQT…SVLA). 2 positions are modified to phosphoserine: serine 1007 and serine 1011.

Protein phosphatase 6 (PP6) holoenzyme is proposed to be a heterotrimeric complex formed by the catalytic subunit, a SAPS domain-containing subunit (PP6R) and an ankyrin repeat-domain containing regulatory subunit (ARS). Interacts with PPP1C and HNRPK. Interacts with PPP6C, PPP6R1 and PPP6R3. Post-translationally, ubiquitinated by the ECS(RAB40C) complex leading to its degradation and decreased PP6 activity. Widely expressed (at protein level).

The protein localises to the nucleus. It localises to the nucleoplasm. It is found in the cytoplasm. Its subcellular location is the cytosol. The protein resides in the cell projection. The protein localises to the lamellipodium. Its function is as follows. Putative regulatory subunit of protein phosphatase 6 (PP6) that may be involved in the recognition of phosphoprotein substrates. Involved in the PP6-mediated dephosphorylation of NFKBIE opposing its degradation in response to TNF-alpha. Selectively inhibits the phosphatase activity of PPP1C. Targets PPP1C to modulate HNRPK phosphorylation. Involved in the PP6-mediated dephosphorylation of MOB1 and induced focal adhesion assembly during cell migration. The sequence is that of Serine/threonine-protein phosphatase 6 regulatory ankyrin repeat subunit A (Ankrd28) from Mus musculus (Mouse).